The chain runs to 97 residues: Large ribosomal subunit protein uL23 (97 aa).

The protein belongs to the universal ribosomal protein uL23 family. As to quaternary structure, part of the 50S ribosomal subunit. Contacts protein L29, and trigger factor when it is bound to the ribosome.

Its function is as follows. One of the early assembly proteins it binds 23S rRNA. One of the proteins that surrounds the polypeptide exit tunnel on the outside of the ribosome. Forms the main docking site for trigger factor binding to the ribosome. The polypeptide is Large ribosomal subunit protein uL23 (Clostridium botulinum (strain ATCC 19397 / Type A)).